We begin with the raw amino-acid sequence, 558 residues long: Methionine--tRNA ligase 1 (558 aa).

A 'HIGH' region motif is present at residues 10–20 (PYINGIKHLGN). Positions 142, 145, 155, and 158 each coordinate Zn(2+). Residues 332 to 336 (KFSTS) carry the 'KMSKS' region motif. Residue threonine 335 coordinates ATP.

Belongs to the class-I aminoacyl-tRNA synthetase family. MetG type 1 subfamily. As to quaternary structure, monomer. The cofactor is Zn(2+).

It is found in the cytoplasm. The catalysed reaction is tRNA(Met) + L-methionine + ATP = L-methionyl-tRNA(Met) + AMP + diphosphate. Functionally, is required not only for elongation of protein synthesis but also for the initiation of all mRNA translation through initiator tRNA(fMet) aminoacylation. The sequence is that of Methionine--tRNA ligase 1 from Acaryochloris marina (strain MBIC 11017).